A 652-amino-acid chain; its full sequence is DNA ligase (652 aa).

Residues 29–33, 78–79, and Glu-107 each bind NAD(+); these read DAEYD and SL. Catalysis depends on Lys-109, which acts as the N6-AMP-lysine intermediate. NAD(+)-binding residues include Arg-130, Glu-164, Lys-278, and Lys-302. Zn(2+) is bound by residues Cys-395, Cys-398, Cys-413, and Cys-418. A BRCT domain is found at 577 to 652; sequence ASDAALTGMT…IKDEAWLESL (76 aa).

Belongs to the NAD-dependent DNA ligase family. LigA subfamily. Mg(2+) is required as a cofactor. It depends on Mn(2+) as a cofactor.

It catalyses the reaction NAD(+) + (deoxyribonucleotide)n-3'-hydroxyl + 5'-phospho-(deoxyribonucleotide)m = (deoxyribonucleotide)n+m + AMP + beta-nicotinamide D-nucleotide.. In terms of biological role, DNA ligase that catalyzes the formation of phosphodiester linkages between 5'-phosphoryl and 3'-hydroxyl groups in double-stranded DNA using NAD as a coenzyme and as the energy source for the reaction. It is essential for DNA replication and repair of damaged DNA. This is DNA ligase from Streptococcus mutans serotype c (strain ATCC 700610 / UA159).